The chain runs to 325 residues: Methionine import ATP-binding protein MetN 3 (325 aa).

The ABC transporter domain maps to isoleucine 2–leucine 239. Glycine 36–serine 43 serves as a coordination point for ATP.

Belongs to the ABC transporter superfamily. Methionine importer (TC 3.A.1.24) family. As to quaternary structure, the complex is composed of two ATP-binding proteins (MetN), two transmembrane proteins (MetI) and a solute-binding protein (MetQ).

Its subcellular location is the cell inner membrane. The enzyme catalyses L-methionine(out) + ATP + H2O = L-methionine(in) + ADP + phosphate + H(+). It carries out the reaction D-methionine(out) + ATP + H2O = D-methionine(in) + ADP + phosphate + H(+). Its function is as follows. Part of the ABC transporter complex MetNIQ involved in methionine import. Responsible for energy coupling to the transport system. The chain is Methionine import ATP-binding protein MetN 3 from Pseudomonas fluorescens (strain ATCC BAA-477 / NRRL B-23932 / Pf-5).